The sequence spans 673 residues: DNA ligase (673 aa).

Residue 34-38 (DAAFD) participates in NAD(+) binding. A disordered region spans residues 54–73 (LRRPDSPTQRVGGATAPDFA). NAD(+)-binding positions include 83 to 84 (SL) and Glu-114. Lys-116 (N6-AMP-lysine intermediate) is an active-site residue. The NAD(+) site is built by Arg-137, Glu-176, Lys-292, and Lys-316. Zn(2+) is bound by residues Cys-410, Cys-413, Cys-428, and Cys-433. Residues 594-673 (PAEGPLAGMT…DEFCERYLQG (80 aa)) enclose the BRCT domain.

It belongs to the NAD-dependent DNA ligase family. LigA subfamily. Requires Mg(2+) as cofactor. Mn(2+) is required as a cofactor.

It carries out the reaction NAD(+) + (deoxyribonucleotide)n-3'-hydroxyl + 5'-phospho-(deoxyribonucleotide)m = (deoxyribonucleotide)n+m + AMP + beta-nicotinamide D-nucleotide.. Functionally, DNA ligase that catalyzes the formation of phosphodiester linkages between 5'-phosphoryl and 3'-hydroxyl groups in double-stranded DNA using NAD as a coenzyme and as the energy source for the reaction. It is essential for DNA replication and repair of damaged DNA. In Symbiobacterium thermophilum (strain DSM 24528 / JCM 14929 / IAM 14863 / T), this protein is DNA ligase.